A 150-amino-acid chain; its full sequence is UPF0098 protein CPn_0877/CP_0992/CPj0877/CpB0906 (150 aa).

Belongs to the UPF0098 family.

The polypeptide is UPF0098 protein CPn_0877/CP_0992/CPj0877/CpB0906 (Chlamydia pneumoniae (Chlamydophila pneumoniae)).